The sequence spans 334 residues: Succinylglutamate desuccinylase (334 aa).

Zn(2+) is bound by residues His59, Glu62, and His151. Residue Glu215 is part of the active site.

This sequence belongs to the AspA/AstE family. Succinylglutamate desuccinylase subfamily. Requires Zn(2+) as cofactor.

The enzyme catalyses N-succinyl-L-glutamate + H2O = L-glutamate + succinate. It functions in the pathway amino-acid degradation; L-arginine degradation via AST pathway; L-glutamate and succinate from L-arginine: step 5/5. In terms of biological role, transforms N(2)-succinylglutamate into succinate and glutamate. The sequence is that of Succinylglutamate desuccinylase from Pseudomonas fluorescens (strain SBW25).